The sequence spans 215 residues: Protein Syd (215 aa).

The protein belongs to the Syd family.

The protein localises to the cell inner membrane. Its function is as follows. Interacts with the SecY protein in vivo. May bind preferentially to an uncomplexed state of SecY, thus functioning either as a chelating agent for excess SecY in the cell or as a regulatory factor that negatively controls the translocase function. The chain is Protein Syd from Shewanella piezotolerans (strain WP3 / JCM 13877).